The following is a 420-amino-acid chain: Vasopressin V1a receptor (420 aa).

The disordered stretch occupies residues Met-1–Pro-20. Residues Met-1–Glu-54 lie on the Extracellular side of the membrane. N-linked (GlcNAc...) asparagine glycosylation occurs at Asn-27. A helical transmembrane segment spans residues Ile-55–Ala-75. The Cytoplasmic portion of the chain corresponds to Leu-76–His-92. A helical membrane pass occupies residues Leu-93–Ile-113. Residues Thr-114–Arg-125 are Extracellular-facing. Cys-124 and Cys-205 are oxidised to a cystine. Residues Val-126–Thr-146 form a helical membrane-spanning segment. The Cytoplasmic portion of the chain corresponds to Ala-147–Arg-168. A helical transmembrane segment spans residues Leu-169–Phe-189. The Extracellular segment spans residues Ser-190–Gly-225. A glycan (N-linked (GlcNAc...) asparagine) is linked at Asn-198. Residues Val-226–Trp-246 traverse the membrane as a helical segment. Over Arg-247–Met-294 the chain is Cytoplasmic. Residues Thr-295–Trp-315 traverse the membrane as a helical segment. At Ser-316–Ser-331 the chain is on the extracellular side. Residues Ile-332–Phe-352 traverse the membrane as a helical segment. The Cytoplasmic segment spans residues Phe-353–Thr-420. S-palmitoyl cysteine attachment occurs at residues Cys-367 and Cys-368. A disordered region spans residues Asp-379–Arg-411. Residues Ser-389–Trp-403 are compositionally biased toward polar residues. Position 406 is a phosphoserine (Ser-406).

The protein belongs to the G-protein coupled receptor 1 family. Vasopressin/oxytocin receptor subfamily.

The protein resides in the cell membrane. In terms of biological role, receptor for arginine vasopressin. The activity of this receptor is mediated by G proteins which activate a phosphatidyl-inositol-calcium second messenger system. Involved in social memory formation. This chain is Vasopressin V1a receptor (Avpr1a), found in Microtus ochrogaster (Prairie vole).